The following is a 236-amino-acid chain: SPbeta prophage-derived uncharacterized lipoprotein YokB (236 aa).

An N-terminal signal peptide occupies residues 1-19 (MNIRFSMLVCVSFIFFTGG). Cys20 carries the N-palmitoyl cysteine lipid modification. Cys20 carries the S-diacylglycerol cysteine lipid modification. 2 disordered regions span residues 23–59 (SSANSNDGSKNKNESKEESSEEGVKENDNKLADTPNM) and 204–236 (VKKVSPEEEKREEKKREETMKSIYGEEHIKDNK). Residues 31–53 (SKNKNESKEESSEEGVKENDNKL) show a composition bias toward basic and acidic residues.

It localises to the cell membrane. In Bacillus subtilis (strain 168), this protein is SPbeta prophage-derived uncharacterized lipoprotein YokB (yokB).